A 1083-amino-acid polypeptide reads, in one-letter code: Neisserial autotransporter lipoprotein NalP (1083 aa).

A signal peptide spans 1 to 27; that stretch reads MRTTPTFPTKTFKPTAMALAVATTLSA. A lipid anchor (N-palmitoyl cysteine) is attached at Cys28. Cys28 carries the S-diacylglycerol cysteine lipid modification. The region spanning 111-483 is the Peptidase S8 domain; the sequence is NDAYKNLINL…WGLLDAGKAM (373 aa). Catalysis depends on charge relay system residues Asp139, His211, and Ser427. One can recognise an Autotransporter domain in the interval 809 to 1083; it reads DGLDHNGTGL…SGRVGVGYRF (275 aa). Transmembrane regions (beta stranded) follow at residues 819 to 828, 844 to 852, 858 to 866, 883 to 891, 897 to 906, 931 to 941, 948 to 958, 984 to 994, 1000 to 1010, 1041 to 1052, 1057 to 1066, and 1074 to 1083; these read RVIAQTQQDG, TQTVGIAAK, TAAATLGMG, SLFAGIRHD, YLKGLFSYGR, QLGALGGVNVP, LTVEGGLRYDL, VGLAGLKLSQP, VLFATAGVERD, RLVAGLGADVEF, NGLARYSYAG, and SGRVGVGYRF.

It belongs to the peptidase S8 family. A fusion protein of the first 44 residues with beta-lactamase is lipidated in E.coli, strongly suggesting this is a lipoprotein in situ. The lipidated form is briefly retained on the cell surface which allows it to process its endogenous substrates on the cell surface before the passenger domain is released into the medium.

The protein resides in the cell outer membrane. It localises to the cell surface. Its subcellular location is the secreted. Functionally, major human immunogenic protein. Autotransporter with a secreted protease domain involved in processing other autotransporter proteins including App and IgA. Probably autoprocesses to release the about 70 kDa passenger domain. Processes the lactoferrin receptor lipoprotein subunit (LbpB) extracellularly, releasing it from the cell surface. LbpB release protects bacteria against complement-mediated killing by anti-LbpB antibodies. Processes NHBA. Lipidation slows its auto-processing, probably allowing it to act on endogenous substrates on the cell surface before the passenger domain is released into the medium. The C-terminal beta-barrel domain inserts into the outer membrane where it probably exports the N-terminal passenger domain. Both the cell surface protein (Neisserial autotransporter lipoprotein NalP) and the passenger domain cleave human (host) complement factor C3, generating a shorter alpha chain and a longer beta chain than normal. Plays a role in extracellular-DNA (eDNA) mediated biofilm formation. In some strains (including cc32 strain H44/76 but not cc11 strain B16B6) eDNA stimulates biofilm formation. When NalP is not expressed (and no longer processes NHBA or IgA) biofilm formation increases. This is probably because the number of positively charged, DNA-binding peptides on the cell surface rises, resulting in increased biofilm formation. In terms of biological role, cleaves human (host) complement factor C3, generating a shorter alpha chain and a longer beta chain than normal. Does not act on mouse or rabbit C3. Cleavage causes C3b degradation by human CFI and CFH, decreases deposition of C3b on the bacteria surface and probably facilitates complement escape. This Neisseria meningitidis serogroup B / serotype 15 (strain H44/76) protein is Neisserial autotransporter lipoprotein NalP.